Reading from the N-terminus, the 426-residue chain is MASIVAVSAREILDSRGNPTVEVDVVLETGAAGRAAVPSGASTGEREAVELRDGDPARYGGKGVLNAVNNVNTEIAEALEDMDATDQIAVDRALLDLDGTENKGRLGANAMLGVSMAVARAAAFEVGLPLYRYLGGPMARTLPVPMMNILNGGAHATNTVDFQEFMIIPVGADSFADGLRMGTQVFHQLKKVLVSRKLSTGVGDEGGFAPNLASDEEALKVIIEAIEAAGFRPGQDIALALDVAASELFQNGQYHFKKSGAPSRSPKDMAEMYAGWLEQYPIVSIEDGMSENDWDGWKLLTEKIGDRCQLVGDDLFCTNSEILAKGIENDVANAILIKVNQIGTLTETFEAIELARSAGYNSVISHRSGETEDTFIADLAVATQAGQIKTGAPSRSDRVAKYNQLLRIEEQLEGYAEYPGGAIFGI.

A (2R)-2-phosphoglycerate-binding site is contributed by Gln163. Glu205 serves as the catalytic Proton donor. Positions 242, 286, and 313 each coordinate Mg(2+). 4 residues coordinate (2R)-2-phosphoglycerate: Lys338, Arg367, Ser368, and Lys389. Lys338 acts as the Proton acceptor in catalysis.

The protein belongs to the enolase family. Requires Mg(2+) as cofactor.

It localises to the cytoplasm. It is found in the secreted. The protein resides in the cell surface. The catalysed reaction is (2R)-2-phosphoglycerate = phosphoenolpyruvate + H2O. Its pathway is carbohydrate degradation; glycolysis; pyruvate from D-glyceraldehyde 3-phosphate: step 4/5. Its function is as follows. Catalyzes the reversible conversion of 2-phosphoglycerate (2-PG) into phosphoenolpyruvate (PEP). It is essential for the degradation of carbohydrates via glycolysis. This chain is Enolase, found in Gemmatimonas aurantiaca (strain DSM 14586 / JCM 11422 / NBRC 100505 / T-27).